Reading from the N-terminus, the 637-residue chain is MNPSPLLDLIDSPQDLRRLDKKQLPRLAGELRTFLLESVGQTGGHFASNLGAVELTIALHYVYDTPEDKLVWDVGHQSYPHKILTGRKNQMHTMRQYGGLAGFPKRCESEYDAFGVGHSSTSIGAALGMAAADKLLGSDRRSVAIIGDGAMTAGQAFEALNCAGDMDVDLLVVLNDNEMSISPNVGALPKYLASNVVRDMHGLLSTVKAQTGKVLDKIPGAMEFAQKVEHKIKTLAEEAEHAKQSLSLFENFGFRYTGPVDGHNVENLVDVLKDLRSRKGPQLLHVITKKGNGYKLAENDPVKYHAVANLPKESAAQMPSEKEPKPAAKPTYTQVFGKWLCDRAAADSRLVAITPAMREGSGLVEFEQRFPDRYFDVGIAEQHAVTFAGGLACEGMKPVVAIYSTFLQRAYDQLVHDIALQNLPVLFAVDRAGIVGADGPTHAGLYDLSFLRCVPNMIVAAPSDENECRLLLSTCYQADAPAAVRYPRGTGTGAPVSDGMETVEIGKGIIRREGEKTAFIAFGSMVAPALAVAEKLNATVADMRFVKPIDEELIVRLARSHDRIVTLEENAEQGGAGGAVLEVLAKHGICKPVLLLGVADTVTGHGDPKKLLDDLGLSAEAVERRVRAWLSDRDAAN.

Thiamine diphosphate-binding positions include His-76 and 117-119 (GHS). A Mg(2+)-binding site is contributed by Asp-148. Thiamine diphosphate contacts are provided by residues 149–150 (GA), Asn-177, Tyr-294, and Glu-381. Position 177 (Asn-177) interacts with Mg(2+).

It belongs to the transketolase family. DXPS subfamily. As to quaternary structure, homodimer. Requires Mg(2+) as cofactor. It depends on thiamine diphosphate as a cofactor.

The catalysed reaction is D-glyceraldehyde 3-phosphate + pyruvate + H(+) = 1-deoxy-D-xylulose 5-phosphate + CO2. The protein operates within metabolic intermediate biosynthesis; 1-deoxy-D-xylulose 5-phosphate biosynthesis; 1-deoxy-D-xylulose 5-phosphate from D-glyceraldehyde 3-phosphate and pyruvate: step 1/1. Catalyzes the acyloin condensation reaction between C atoms 2 and 3 of pyruvate and glyceraldehyde 3-phosphate to yield 1-deoxy-D-xylulose-5-phosphate (DXP). This chain is 1-deoxy-D-xylulose-5-phosphate synthase, found in Neisseria meningitidis serogroup B (strain ATCC BAA-335 / MC58).